A 694-amino-acid chain; its full sequence is LMBR1 domain-containing protein 2 homolog (694 aa).

Over 1-3 (MAY) the chain is Extracellular. A helical membrane pass occupies residues 4–26 (LLSFGIVAALFLASISLYRYGNI). Over 27–30 (PRQH) the chain is Cytoplasmic. A helical membrane pass occupies residues 31–51 (ILVTLSVLTAWCFSFLIVFTI). Residues 52-106 (PLDVTSTLYRQCVEEHRPTPAPNVTNTSSATVGPPPQCQEPWGMVPASVFPNLWR) are Extracellular-facing. Residues Asn74 and Asn77 are each glycosylated (N-linked (GlcNAc...) asparagine). Residues 107–127 (IIYWSSQFLTWLIMPLMQSYL) form a helical membrane-spanning segment. The Cytoplasmic segment spans residues 128–144 (KAGDFTVKGKLKSALIE). A helical membrane pass occupies residues 145–165 (NAIYYGSYLFICGVLLIYIAV). Over 166–181 (KGESLDWQKLKAIASS) the chain is Extracellular. The chain crosses the membrane as a helical span at residues 182 to 202 (ASNTWGLFLLILLLGYALVEV). At 203 to 381 (PRSLWNNAKP…ECLLKAPFLK (179 aa)) the chain is on the cytoplasmic side. A coiled-coil region spans residues 222–249 (KAAKLSTEKAEAEEHVDDILESLQGLSR). The helical transmembrane segment at 382–402 (TMCVLTATMSAMVVWSELTFF) threads the bilayer. At 403 to 426 (SRHPVLSIFANVIYVAKESYDFFT) the chain is on the extracellular side. Residues 427-447 (IEVFSMVVLCYFFYCTYSTIL) form a helical membrane-spanning segment. Residues 448-467 (RIRFLNLYYLAPHHQTNEHS) are Cytoplasmic-facing. Residues 468-488 (LIFSGMLLCRLTPPMCLNFLG) form a helical membrane-spanning segment. At 489 to 514 (LIHMDTHIIPNRIMETVYTQIMGHMD) the chain is on the extracellular side. A helical membrane pass occupies residues 515–535 (VIGIISNGFNIYFPMCMLAFC). Over 536 to 694 (LATWFSLGSR…PPPRGLFDDV (159 aa)) the chain is Cytoplasmic. Residues 564-592 (ELVQEGKDLIAREKRRRQRAEEAMARRRD) adopt a coiled-coil conformation. Residues 673–694 (DYEAETDGRIVGPPPRGLFDDV) are disordered.

This sequence belongs to the LIMR family.

Its subcellular location is the membrane. The chain is LMBR1 domain-containing protein 2 homolog from Drosophila melanogaster (Fruit fly).